Here is a 223-residue protein sequence, read N- to C-terminus: MKRKRYEMEKKKKTEIQTAIEELSVFIVTKPADKTEATHIPLRPILSFCSLIIQVLDKIGPTMAVLRQDIDQNIQRLEKFYETDSCVYSNLAEILKKEKEEGTSKMVASCGRALFWLTRTMDFTAGLLRLLSKEMSSKMEELVEECYMTTLKPHHGWIASAAFKVCLKLVPDNKTFMEAIGARDESYDTLREDIDTLSSLLTPILKEIYFVLEQYGLSRLRSM.

4 residues coordinate a ganglioside GM3 (d18:1(4E)): D69, N73, W116, and H155.

Belongs to the GLTP family.

Functionally, transfers glycolipids in vitro. The sequence is that of Glycolipid transfer protein 2 from Arabidopsis thaliana (Mouse-ear cress).